A 453-amino-acid polypeptide reads, in one-letter code: MQAPSVHQHVAFTEEIGDLPDGSSYMIRVPENWNGVLIRDLDLVSGTSNSNAARYETMLKEGFAVAGTARHPLRQWQYDPAHEIENLNHVLDTFEENYGSPERVIQYGCSGGAHVSLAVAEDFSDRVDGSVALAAHTPVWIMNSFLDGWFSLQSLIGEYYVEAGHGPLSDLAITKLPNDGSSNSSGHGMEGDLPAAWRNAFTAANATPEGRARMALAFALGQWSPWLADNTPQPDLDDPEAIADSVYESAMRLAGSPGGEARIMFENAARGQQLSWNDDIDYADFWENSNPAMKSAVQELYDTAGLDLQSDIETVNSQPRIEASQYALDYWNTPGRNVIGDPEVPVLRLHMIGDYQIPYSLVQGYSDLISENNNDDLYRTAFVQSTGHCNFTAAESSAAIEVMMQRLDTGEWPSTEPDDLNAIAEASNTGTEARFMALDGWEIPEYNRTWKPE.

Monomer. The N-terminus is blocked.

The catalysed reaction is a phtalamide + H2O = phthalate + a primary amine. Its activity is regulated as follows. Inhibited by iodoacetate, p-hydroxymercuric benzoate and copper ions. Catalyzes the removal of the phthalyl group from phthalyl amides generating phthalate and an amine. The enzyme has a broad substrate specificity and hydrolyzes phthalylated amino acids, peptides, beta-lactams, aromatic and aliphatic amines; substitutions allowed on the phthalyl group include 6-F, 6-NH(2), 3-OH, and a nitrogen in the aromatic ring ortho to the carboxy group attached to the amine. This Xanthobacter agilis protein is o-phthalyl amidase.